We begin with the raw amino-acid sequence, 389 residues long: AIAAVITFLILFTIFGNALVILAVLTSRSLRAPQNLFLVSLAAADILVATLIIPFSLANELLGYWYFRRTWCEVYLALDVLFCTSSIVHLCAISLDRYWAVTRALEYNTKRTPRRIKCIILTVWLIAAVISLPPLIYKGDQGPQPRGRPQCKLNQEAWYILASSIGSFFAPCLIMILVYLRIYLIAKRSHLRGPRAKGGPGGGGSKQPHPVPAGASASAKLPTVASCLAAAGEANGHSEPTGEKEAETPEDSGTPALPSSWPALPSSGQDQKEGVCGASLEEEAEEEEEEEEEEEEGEEECEPQALPASPASACSPPLQQPQGSRVLATLRGQVLLGRGVATAGAQWWRRRAQLTREKRFTFVLAVVIGVFVLCWFPFFFSYSLGAICP.

Residues 1 to 25 (AIAAVITFLILFTIFGNALVILAVL) form a helical membrane-spanning segment. Topologically, residues 26–36 (TSRSLRAPQNL) are cytoplasmic. The chain crosses the membrane as a helical span at residues 37–62 (FLVSLAAADILVATLIIPFSLANELL). The Extracellular portion of the chain corresponds to 63–72 (GYWYFRRTWC). Cys72 and Cys151 form a disulfide bridge. A helical transmembrane segment spans residues 73-95 (EVYLALDVLFCTSSIVHLCAISL). Residues 96–117 (DRYWAVTRALEYNTKRTPRRIK) lie on the Cytoplasmic side of the membrane. The chain crosses the membrane as a helical span at residues 118 to 140 (CIILTVWLIAAVISLPPLIYKGD). Residues 141 to 156 (QGPQPRGRPQCKLNQE) are Extracellular-facing. The chain crosses the membrane as a helical span at residues 157-180 (AWYILASSIGSFFAPCLIMILVYL). At 181 to 363 (RIYLIAKRSH…LTREKRFTFV (183 aa)) the chain is on the cytoplasmic side. Disordered regions lie at residues 194-216 (PRAKGGPGGGGSKQPHPVPAGAS) and 233-320 (EANG…PLQQ). The segment covering 196–205 (AKGGPGGGGS) has biased composition (gly residues). Residues 255–267 (PALPSSWPALPSS) show a composition bias toward low complexity. Positions 280 to 302 (LEEEAEEEEEEEEEEEEGEEECE) are enriched in acidic residues. The span at 303 to 320 (PQALPASPASACSPPLQQ) shows a compositional bias: low complexity. Residues 364-387 (LAVVIGVFVLCWFPFFFSYSLGAI) form a helical membrane-spanning segment. The Extracellular segment spans residues 388 to 389 (CP).

This sequence belongs to the G-protein coupled receptor 1 family. Adrenergic receptor subfamily. ADRA2B sub-subfamily. As to quaternary structure, interacts with RAB26. Interacts with PPP1R9B. Interacts with GGA1, GGA2 and GGA3.

The protein resides in the cell membrane. Its function is as follows. Alpha-2 adrenergic receptors mediate the catecholamine-induced inhibition of adenylate cyclase through the action of G proteins. This chain is Alpha-2B adrenergic receptor (ADRA2B), found in Equus caballus (Horse).